Consider the following 229-residue polypeptide: Large ribosomal subunit protein uL1 (229 aa).

It belongs to the universal ribosomal protein uL1 family. Part of the 50S ribosomal subunit.

Functionally, binds directly to 23S rRNA. The L1 stalk is quite mobile in the ribosome, and is involved in E site tRNA release. Its function is as follows. Protein L1 is also a translational repressor protein, it controls the translation of the L11 operon by binding to its mRNA. The sequence is that of Large ribosomal subunit protein uL1 from Streptococcus equi subsp. equi (strain 4047).